A 197-amino-acid chain; its full sequence is Adenylate kinase isoenzyme 6 homolog FAP7 (197 aa).

Residues G17, G19, K20, S21, and S22 each coordinate ATP. The interval N38–V61 is NMPbind. The interval A113–E123 is LID. R114 contributes to the ATP binding site. Residues P176–E197 form a disordered region. At Y183 the chain carries Phosphotyrosine. 2 positions are modified to phosphoserine: S188 and S196.

Belongs to the adenylate kinase family. AK6 subfamily. In terms of assembly, interacts with small ribosomal subunit protein uS11B/RPS14B. Not a structural component of 43S pre-ribosomes, but transiently interacts with them by binding to uS11/RPS14.

Its subcellular location is the cytoplasm. It is found in the nucleus. It catalyses the reaction AMP + ATP = 2 ADP. It carries out the reaction ATP + H2O = ADP + phosphate + H(+). Its function is as follows. Broad-specificity nucleoside monophosphate (NMP) kinase that catalyzes the reversible transfer of the terminal phosphate group between nucleoside triphosphates and monophosphates. Also has ATPase activity. Involved in the late cytoplasmic maturation steps of the 40S ribosomal particles, specifically 18S rRNA maturation. Required for cleavage of the 20S pre-rRNA at site D in the cytoplasm. While NMP activity is not required for ribosome maturation, ATPase activity is. Associates transiently with small ribosomal subunit protein uS11. ATP hydrolysis breaks the interaction with uS11. May temporarily remove uS11 from the ribosome to enable a conformational change of the ribosomal RNA that is needed for the final maturation step of the small ribosomal subunit. Promotes formation of the rotated state in 80S-like ribosomes, a key intermediate in translocation, thereby releasing the essential assembly factor DIM1 from pre-40S subunits. Its NMP activity may have a role in nuclear energy homeostasis. Involved in oxidative stress response. Required for POS9-dependent target gene transcription upon oxidative stress. The polypeptide is Adenylate kinase isoenzyme 6 homolog FAP7 (Saccharomyces cerevisiae (strain ATCC 204508 / S288c) (Baker's yeast)).